Reading from the N-terminus, the 230-residue chain is Voltage-gated hydrogen channel 1 (230 aa).

Residues 1 to 58 (MAGCLRHFTSVGDDTKKKAWKEEDVEVAHEEEPKNTPHPFIASYSFRGALKWLFSSHK) lie on the Cytoplasmic side of the membrane. The chain crosses the membrane as a helical span at residues 59 to 79 (FQIVIICLVILDALFVLVEVL). Over 80–96 (LDLELLAEKVDHIIPEI) the chain is Extracellular. A helical transmembrane segment spans residues 97–119 (FHYLSISVLSFFILEIAGKLYAF). The Cytoplasmic segment spans residues 120 to 127 (RLEFFHHK). The chain crosses the membrane as a helical span at residues 128–148 (FEVFDAAIVVISFIIDIVYIS). At 149–155 (REDIFNA) the chain is on the extracellular side. Residues 156-176 (VGLLILLRLWRVARIVNGIIV) traverse the membrane as a helical segment. Residues 177–226 (SVKTQAEDKIHRLKENQESLLEKVAHLEQQCAQQEQEIVRLQTLLQQHNV) are a coiled coil. Residues 177–230 (SVKTQAEDKIHRLKENQESLLEKVAHLEQQCAQQEQEIVRLQTLLQQHNVFPAS) are Cytoplasmic-facing.

Belongs to the hydrogen channel family. Homodimer.

The protein localises to the membrane. The protein resides in the cell membrane. Functionally, mediates the voltage-dependent proton permeability of excitable membranes. Forms a proton-selective channel through which protons may pass in accordance with their electrochemical gradient. The protein is Voltage-gated hydrogen channel 1 (hvcn1) of Xenopus tropicalis (Western clawed frog).